A 325-amino-acid polypeptide reads, in one-letter code: Beta-1,3-galactosyltransferase brn (325 aa).

The Cytoplasmic segment spans residues 1–7 (MQSKHRK). The helical; Signal-anchor for type II membrane protein transmembrane segment at 8–28 (LLLRCLLVLPLILLVDYCGLL) threads the bilayer. The Lumenal segment spans residues 29–325 (THLHELNFER…WNECRSANYA (297 aa)). Asn-149 and Asn-166 each carry an N-linked (GlcNAc...) asparagine glycan.

The protein belongs to the glycosyltransferase 31 family.

Its subcellular location is the golgi apparatus membrane. It catalyses the reaction a ganglioside GM2 (d18:1(4E)) + UDP-alpha-D-galactose = a ganglioside GM1 (d18:1(4E)) + UDP + H(+). Neurogenic protein essential for the development and maintenance of epithelial structure. Required in the germline for establishing the follicular epithelium and for determining the dorsal-ventral polarity. Collaborates with Notch on the apical surface of follicle cells to mediate germline-follicle cell adhesion. Brn has a role in chorion formation. In Drosophila melanogaster (Fruit fly), this protein is Beta-1,3-galactosyltransferase brn (brn).